The following is a 221-amino-acid chain: Epididymal secretory glutathione peroxidase (221 aa).

An N-terminal signal peptide occupies residues 1 to 21 (MVTELRVFYLVPLLLASYVQT). C73 is an active-site residue.

It belongs to the glutathione peroxidase family. In terms of tissue distribution, epididymis.

It localises to the secreted. The catalysed reaction is 2 glutathione + H2O2 = glutathione disulfide + 2 H2O. Protects cells and enzymes from oxidative damage, by catalyzing the reduction of hydrogen peroxide, lipid peroxides and organic hydroperoxide, by glutathione. May constitute a glutathione peroxidase-like protective system against peroxide damage in sperm membrane lipids. The sequence is that of Epididymal secretory glutathione peroxidase (Gpx5) from Mus musculus (Mouse).